A 248-amino-acid chain; its full sequence is Trihelix transcription factor ENAP2 (248 aa).

The segment covering 1 to 13 (METTTPQSKSSVS) has biased composition (polar residues). Residues 1–20 (METTTPQSKSSVSHRPPLGR) are disordered. Residues 24 to 113 (WSEEATATLV…RLDVLIGPVV (90 aa)) constitute a DNA-binding region (MADF). The Nuclear localization signal signature appears at 69–76 (RKKTDLQC). Residues 123–150 (SAPFKNHLNPTGSNSTGSSLEDDDEDDD) form a disordered region. The segment covering 130–141 (LNPTGSNSTGSS) has biased composition (polar residues). Residues 190–210 (YERIEGKKQQMMIELEKQRME) adopt a coiled-coil conformation.

As to quaternary structure, interacts with the Agrobacterium tumefaciens virulence protein F (VirF) in the nucleus. Binds to EIN2 C-terminal region in the presence of ethylene.

It is found in the nucleus. The protein localises to the nucleoplasm. Functionally, probable transcription regulator. Promotes histone acetylation during ethylene signaling in an EIN2-dependent manner, thus regulating positively ethylene-responsive genes. The polypeptide is Trihelix transcription factor ENAP2 (Arabidopsis thaliana (Mouse-ear cress)).